The following is a 62-amino-acid chain: DNA-binding protein 7 (62 aa).

This sequence belongs to the 7 kDa DNA-binding/endoribonuclease P2 family. Monomer.

Its subcellular location is the cytoplasm. Can constrain negative DNA supercoils. May be involved in maintaining the integrity of the genome at high temperature. This Metallosphaera sedula (strain ATCC 51363 / DSM 5348 / JCM 9185 / NBRC 15509 / TH2) protein is DNA-binding protein 7.